A 563-amino-acid chain; its full sequence is Chitinase A (563 aa).

Residues 1–23 form the signal peptide; the sequence is MRKFNKPLLALLIGSTLCSAAQA. The region spanning 158 to 559 is the GH18 domain; it reads KVVGSYFVEW…NSMNASLGNS (402 aa). The active-site Proton donor is the Glu315.

Belongs to the glycosyl hydrolase 18 family. Chitinase class II subfamily.

It carries out the reaction Random endo-hydrolysis of N-acetyl-beta-D-glucosaminide (1-&gt;4)-beta-linkages in chitin and chitodextrins.. This is Chitinase A (chiA) from Serratia marcescens.